The following is a 150-amino-acid chain: Large ribosomal subunit protein bL9 (150 aa).

The protein belongs to the bacterial ribosomal protein bL9 family.

Binds to the 23S rRNA. The chain is Large ribosomal subunit protein bL9 from Neisseria meningitidis serogroup B (strain ATCC BAA-335 / MC58).